The sequence spans 882 residues: Alanine--tRNA ligase (882 aa).

Positions 571, 575, 673, and 677 each coordinate Zn(2+).

Belongs to the class-II aminoacyl-tRNA synthetase family. It depends on Zn(2+) as a cofactor.

It localises to the cytoplasm. It carries out the reaction tRNA(Ala) + L-alanine + ATP = L-alanyl-tRNA(Ala) + AMP + diphosphate. Functionally, catalyzes the attachment of alanine to tRNA(Ala) in a two-step reaction: alanine is first activated by ATP to form Ala-AMP and then transferred to the acceptor end of tRNA(Ala). Also edits incorrectly charged Ser-tRNA(Ala) and Gly-tRNA(Ala) via its editing domain. This chain is Alanine--tRNA ligase, found in Desulfotalea psychrophila (strain LSv54 / DSM 12343).